The primary structure comprises 398 residues: AT-rich interactive domain-containing protein 6 (398 aa).

Residues 25–87 (EPLEPENDHN…PKTEGENAKK (63 aa)) are disordered. One can recognise an ARID domain in the interval 106–197 (PVEQVAFLRE…ALLEYEKCLR (92 aa)). The tract at residues 213-236 (SSVEKEPSSHQGSGSGRARRDSAA) is disordered. One can recognise a sHSP domain in the interval 305 to 398 (VGPVADWVKI…RLFIRVPFEQ (94 aa)).

Belongs to the small heat shock protein (HSP20) family.

The protein localises to the nucleus. The chain is AT-rich interactive domain-containing protein 6 (ARID6) from Arabidopsis thaliana (Mouse-ear cress).